The following is a 1167-amino-acid chain: ATP-dependent helicase/nuclease subunit A (1167 aa).

One can recognise a UvrD-like helicase ATP-binding domain in the interval 2–451; it reads KNWTAEQMRA…IELSLNFRSR (450 aa). 23 to 30 serves as a coordination point for ATP; it reads AAAGAGKT. In terms of domain architecture, UvrD-like helicase C-terminal spans 478 to 768; it reads KAFLKKGADY…RVMSVHKSKG (291 aa).

Belongs to the helicase family. AddA subfamily. In terms of assembly, heterodimer of AddA and AddB/RexB. Mg(2+) is required as a cofactor.

The enzyme catalyses Couples ATP hydrolysis with the unwinding of duplex DNA by translocating in the 3'-5' direction.. It catalyses the reaction ATP + H2O = ADP + phosphate + H(+). In terms of biological role, the heterodimer acts as both an ATP-dependent DNA helicase and an ATP-dependent, dual-direction single-stranded exonuclease. Recognizes the chi site generating a DNA molecule suitable for the initiation of homologous recombination. The AddA nuclease domain is required for chi fragment generation; this subunit has the helicase and 3' -&gt; 5' nuclease activities. The sequence is that of ATP-dependent helicase/nuclease subunit A from Carboxydothermus hydrogenoformans (strain ATCC BAA-161 / DSM 6008 / Z-2901).